The sequence spans 71 residues: DNA-directed RNA polymerase subunit epsilon (71 aa).

It belongs to the RNA polymerase subunit epsilon family. In terms of assembly, RNAP is composed of a core of 2 alpha, a beta and a beta' subunit. The core is associated with a delta subunit, and at least one of epsilon or omega. When a sigma factor is associated with the core the holoenzyme is formed, which can initiate transcription.

It carries out the reaction RNA(n) + a ribonucleoside 5'-triphosphate = RNA(n+1) + diphosphate. Functionally, a non-essential component of RNA polymerase (RNAP). This chain is DNA-directed RNA polymerase subunit epsilon, found in Staphylococcus saprophyticus subsp. saprophyticus (strain ATCC 15305 / DSM 20229 / NCIMB 8711 / NCTC 7292 / S-41).